Reading from the N-terminus, the 84-residue chain is Control protein C.SmaI (84 aa).

Residues 19-73 (VRSYRNINNLSQEQLAEISGLHRTYIGSVERKERNVTLSTLIILAKALNTSVPKL) enclose the HTH cro/C1-type domain. Positions 30–49 (QEQLAEISGLHRTYIGSVER) form a DNA-binding region, H-T-H motif.

May control expression of its associated restriction-modification system SmaI. This Serratia marcescens protein is Control protein C.SmaI.